The following is a 940-amino-acid chain: Phosphoenolpyruvate carboxylase (940 aa).

Residues histidine 138 and lysine 603 contribute to the active site.

The protein belongs to the PEPCase type 1 family. The cofactor is Mg(2+).

The enzyme catalyses oxaloacetate + phosphate = phosphoenolpyruvate + hydrogencarbonate. Functionally, forms oxaloacetate, a four-carbon dicarboxylic acid source for the tricarboxylic acid cycle. The protein is Phosphoenolpyruvate carboxylase of Streptococcus thermophilus (strain CNRZ 1066).